Consider the following 415-residue polypeptide: 26S proteasome regulatory subunit 6B (415 aa).

203–210 (GPPGCGKT) lines the ATP pocket.

Belongs to the AAA ATPase family.

The protein resides in the cytoplasm. Its subcellular location is the nucleus. Its function is as follows. The 26S proteasome is involved in the ATP-dependent degradation of ubiquitinated proteins. The regulatory (or ATPase) complex confers ATP dependency and substrate specificity to the 26S complex. This Manduca sexta (Tobacco hawkmoth) protein is 26S proteasome regulatory subunit 6B.